The following is a 200-amino-acid chain: dTTP/UTP pyrophosphatase (200 aa).

Catalysis depends on Asp-76, which acts as the Proton acceptor.

Belongs to the Maf family. YhdE subfamily. A divalent metal cation is required as a cofactor.

The protein resides in the cytoplasm. It catalyses the reaction dTTP + H2O = dTMP + diphosphate + H(+). The catalysed reaction is UTP + H2O = UMP + diphosphate + H(+). Its function is as follows. Nucleoside triphosphate pyrophosphatase that hydrolyzes dTTP and UTP. May have a dual role in cell division arrest and in preventing the incorporation of modified nucleotides into cellular nucleic acids. In Acetivibrio thermocellus (strain ATCC 27405 / DSM 1237 / JCM 9322 / NBRC 103400 / NCIMB 10682 / NRRL B-4536 / VPI 7372) (Clostridium thermocellum), this protein is dTTP/UTP pyrophosphatase.